The sequence spans 350 residues: Heat-inducible transcription repressor HrcA (350 aa).

It belongs to the HrcA family.

In terms of biological role, negative regulator of class I heat shock genes (grpE-dnaK-dnaJ and groELS operons). Prevents heat-shock induction of these operons. The protein is Heat-inducible transcription repressor HrcA of Ligilactobacillus salivarius (strain UCC118) (Lactobacillus salivarius).